A 469-amino-acid polypeptide reads, in one-letter code: MNLGKIVQVIGNVVDVEFGEGKLPPLLTALFVSNPGLNDQEDNLVLEVAQHLGDNVVRTIGMDLTDGLVRGMPVKDTGNPIMMPVGAAVLGRVINVVGRTVDGLGPVNTDTYMPIHRTAPAFTEQDTSVKVLETGVKVIDLLVPFPRGGKMGMFGGAGVGKTVVMMEMIHNIAMQHGGISVFAGVGERTREGNDLYHEMKDSGVLPRAGLVYGQMTEPPGARARVALSALTVAEYFRDVEGQDVLLFVDNIFRFTQAGAEVSALLGRMPSAVGYQPTLGTDLGELQERITSTTKGSITSVQCVYVPADDLTDPAPATTFAHLDGTVVLSRQIAELGIYPAVDPLDSTSRILDPNVLGEDHYYTAREVQQILQKYKDLQDIIAILGMDELSDEDKLTVARARKIQRFLSQPFHVAETFTGVAGKYVKVEDTVRGFKEICEGKHDDIPEQAFFMAGGIEEVLEKAKQMSAA.

155 to 162 is a binding site for ATP; it reads GGAGVGKT.

It belongs to the ATPase alpha/beta chains family. F-type ATPases have 2 components, CF(1) - the catalytic core - and CF(0) - the membrane proton channel. CF(1) has five subunits: alpha(3), beta(3), gamma(1), delta(1), epsilon(1). CF(0) has three main subunits: a(1), b(2) and c(9-12). The alpha and beta chains form an alternating ring which encloses part of the gamma chain. CF(1) is attached to CF(0) by a central stalk formed by the gamma and epsilon chains, while a peripheral stalk is formed by the delta and b chains.

The protein localises to the cell inner membrane. The enzyme catalyses ATP + H2O + 4 H(+)(in) = ADP + phosphate + 5 H(+)(out). Functionally, produces ATP from ADP in the presence of a proton gradient across the membrane. The catalytic sites are hosted primarily by the beta subunits. This chain is ATP synthase subunit beta, found in Syntrophobacter fumaroxidans (strain DSM 10017 / MPOB).